The sequence spans 273 residues: 4-hydroxy-3-methylbut-2-enyl diphosphate reductase (273 aa).

C12 serves as a coordination point for [4Fe-4S] cluster. H36 and H70 together coordinate (2E)-4-hydroxy-3-methylbut-2-enyl diphosphate. Residues H36 and H70 each contribute to the dimethylallyl diphosphate site. 2 residues coordinate isopentenyl diphosphate: H36 and H70. Position 92 (C92) interacts with [4Fe-4S] cluster. H120 serves as a coordination point for (2E)-4-hydroxy-3-methylbut-2-enyl diphosphate. H120 contributes to the dimethylallyl diphosphate binding site. H120 provides a ligand contact to isopentenyl diphosphate. The active-site Proton donor is the E122. T157 serves as a coordination point for (2E)-4-hydroxy-3-methylbut-2-enyl diphosphate. C185 contacts [4Fe-4S] cluster. 4 residues coordinate (2E)-4-hydroxy-3-methylbut-2-enyl diphosphate: S213, S214, N215, and S257. Dimethylallyl diphosphate is bound by residues S213, S214, N215, and S257. Positions 213, 214, 215, and 257 each coordinate isopentenyl diphosphate.

It belongs to the IspH family. [4Fe-4S] cluster is required as a cofactor.

The enzyme catalyses isopentenyl diphosphate + 2 oxidized [2Fe-2S]-[ferredoxin] + H2O = (2E)-4-hydroxy-3-methylbut-2-enyl diphosphate + 2 reduced [2Fe-2S]-[ferredoxin] + 2 H(+). The catalysed reaction is dimethylallyl diphosphate + 2 oxidized [2Fe-2S]-[ferredoxin] + H2O = (2E)-4-hydroxy-3-methylbut-2-enyl diphosphate + 2 reduced [2Fe-2S]-[ferredoxin] + 2 H(+). It participates in isoprenoid biosynthesis; dimethylallyl diphosphate biosynthesis; dimethylallyl diphosphate from (2E)-4-hydroxy-3-methylbutenyl diphosphate: step 1/1. The protein operates within isoprenoid biosynthesis; isopentenyl diphosphate biosynthesis via DXP pathway; isopentenyl diphosphate from 1-deoxy-D-xylulose 5-phosphate: step 6/6. Catalyzes the conversion of 1-hydroxy-2-methyl-2-(E)-butenyl 4-diphosphate (HMBPP) into a mixture of isopentenyl diphosphate (IPP) and dimethylallyl diphosphate (DMAPP). Acts in the terminal step of the DOXP/MEP pathway for isoprenoid precursor biosynthesis. In Helicobacter hepaticus (strain ATCC 51449 / 3B1), this protein is 4-hydroxy-3-methylbut-2-enyl diphosphate reductase.